The primary structure comprises 613 residues: Phostensin (613 aa).

A compositionally biased stretch (basic and acidic residues) spans 18–33 (EEASVRGREKAERERL). 2 disordered regions span residues 18 to 231 (EEAS…SAYQ) and 266 to 500 (GEER…AVPG). A phosphoserine mark is found at S54, S125, S133, S175, and S195. Basic and acidic residues-rich tracts occupy residues 104 to 154 (RSEE…ERRL) and 167 to 191 (LEAR…EAWK). T199 is subject to Phosphothreonine. Basic and acidic residues predominate over residues 199 to 221 (TPERSLRLAESREQSPRRKEVES). At S224 the chain carries Phosphoserine. Residues 266-282 (GEERQDYSEECGRKEEW) are compositionally biased toward basic and acidic residues. Residues 295–309 (LSETLTREAQGNSSA) are compositionally biased toward polar residues. 3 stretches are compositionally biased toward basic and acidic residues: residues 314–327 (AEQR…RGMK), 340–350 (KAREWTPRDIE), and 357–366 (EPPESAEKLL). 2 positions are modified to phosphoserine: S368 and S432. Over residues 424–446 (QPPPPAPLSPPPPAPTAPQPPGD) the composition is skewed to pro residues. K457 bears the N6-acetyllysine mark. Residues 476 to 499 (PRRSVPPATPATPTSPATVDAAVP) show a composition bias toward low complexity. A phosphoserine mark is found at S490 and S530. The interval 552 to 595 (QYPSESSVLEELGPEPEVPSAPNPPAAQPDDEEDEEELLLLQPE) is disordered. Positions 567–578 (PEVPSAPNPPAA) are enriched in pro residues. The segment covering 580-589 (PDDEEDEEEL) has biased composition (acidic residues).

In terms of assembly, interacts with Protein phosphatase 1 (PP1). As to expression, isoform 4 is predominantly expressed in leukocytes and spleen.

It is found in the cytoplasm. Its subcellular location is the cytoskeleton. May target protein phosphatase 1 to F-actin cytoskeleton. In Homo sapiens (Human), this protein is Phostensin (PPP1R18).